A 163-amino-acid chain; its full sequence is Acetolactate synthase isozyme 3 small subunit (163 aa).

Residues 4-78 form the ACT domain; the sequence is ILSVLLENES…DVLRVSELGQ (75 aa).

This sequence belongs to the acetolactate synthase small subunit family. As to quaternary structure, dimer of large and small chains.

It carries out the reaction 2 pyruvate + H(+) = (2S)-2-acetolactate + CO2. The protein operates within amino-acid biosynthesis; L-isoleucine biosynthesis; L-isoleucine from 2-oxobutanoate: step 1/4. Its pathway is amino-acid biosynthesis; L-valine biosynthesis; L-valine from pyruvate: step 1/4. With respect to regulation, sensitive to valine inhibition. The polypeptide is Acetolactate synthase isozyme 3 small subunit (ilvH) (Escherichia coli (strain K12)).